A 359-amino-acid chain; its full sequence is Nicotinate-nucleotide--dimethylbenzimidazole phosphoribosyltransferase (359 aa).

Glu-318 acts as the Proton acceptor in catalysis.

This sequence belongs to the CobT family. Homodimer.

It carries out the reaction 5,6-dimethylbenzimidazole + nicotinate beta-D-ribonucleotide = alpha-ribazole 5'-phosphate + nicotinate + H(+). It functions in the pathway nucleoside biosynthesis; alpha-ribazole biosynthesis; alpha-ribazole from 5,6-dimethylbenzimidazole: step 1/2. Its function is as follows. Catalyzes the synthesis of alpha-ribazole-5'-phosphate from nicotinate mononucleotide (NAMN) and 5,6-dimethylbenzimidazole (DMB). In Escherichia coli O17:K52:H18 (strain UMN026 / ExPEC), this protein is Nicotinate-nucleotide--dimethylbenzimidazole phosphoribosyltransferase.